Consider the following 477-residue polypeptide: Protein RdxB (477 aa).

Residues 1–29 are Cytoplasmic-facing; sequence MTSPDTQTSSLYAKREPVFPKRVSGKFRS. The helical transmembrane segment at 30-50 threads the bilayer; sequence LKWWIMGVTLGIYYIAPWLRW. Over 51–81 the chain is Periplasmic; the sequence is DRGPNLPDQAILVDLANRRFFFFMIEIWPHE. The chain crosses the membrane as a helical span at residues 82–102; that stretch reads FYFVAGLLIMAGLGLFLFTSA. The Cytoplasmic segment spans residues 103-154; sequence AGRVWCGYACPQTVWTDLFILVERWVEGDRNARIRLLRQRWDLEKTRKYLTK. A helical membrane pass occupies residues 155–175; that stretch reads WTLWLLIGLATGGAWVFYFTD. The Periplasmic segment spans residues 176–189; it reads APTLLVDLLTGNAH. A helical membrane pass occupies residues 190 to 210; the sequence is PVAYITMATLTATTFAFGGFA. The Cytoplasmic segment spans residues 211 to 338; that stretch reads REQICIYACP…SAWRHVFRLR (128 aa). The 4Fe-4S ferredoxin-type domain occupies 253-281; sequence EPLSPDQGDCIDCMACVNVCPMGIDIRDG. [4Fe-4S] cluster-binding residues include C262, C265, C268, C272, C286, C289, C292, and C296. A helical membrane pass occupies residues 339 to 359; sequence TLIYTALWSGVGLALIVALFL. The Periplasmic segment spans residues 360-477; it reads RSPIDINVTP…HDTIFNGRGN (118 aa).

[4Fe-4S] cluster is required as a cofactor.

The protein resides in the cell membrane. Its function is as follows. Involved in a membrane generated redox signal; required to maintain repression of photosynthesis gene expression in the presence of oxygen. This chain is Protein RdxB (rdxB), found in Cereibacter sphaeroides (strain ATCC 17023 / DSM 158 / JCM 6121 / CCUG 31486 / LMG 2827 / NBRC 12203 / NCIMB 8253 / ATH 2.4.1.) (Rhodobacter sphaeroides).